Consider the following 145-residue polypeptide: D-aminoacyl-tRNA deacylase (145 aa).

The short motif at 137-138 (GP) is the Gly-cisPro motif, important for rejection of L-amino acids element.

The protein belongs to the DTD family. Homodimer.

It is found in the cytoplasm. It carries out the reaction glycyl-tRNA(Ala) + H2O = tRNA(Ala) + glycine + H(+). The enzyme catalyses a D-aminoacyl-tRNA + H2O = a tRNA + a D-alpha-amino acid + H(+). An aminoacyl-tRNA editing enzyme that deacylates mischarged D-aminoacyl-tRNAs. Also deacylates mischarged glycyl-tRNA(Ala), protecting cells against glycine mischarging by AlaRS. Acts via tRNA-based rather than protein-based catalysis; rejects L-amino acids rather than detecting D-amino acids in the active site. By recycling D-aminoacyl-tRNA to D-amino acids and free tRNA molecules, this enzyme counteracts the toxicity associated with the formation of D-aminoacyl-tRNA entities in vivo and helps enforce protein L-homochirality. The chain is D-aminoacyl-tRNA deacylase from Carboxydothermus hydrogenoformans (strain ATCC BAA-161 / DSM 6008 / Z-2901).